Consider the following 366-residue polypeptide: tRNA/tmRNA (uracil-C(5))-methyltransferase (366 aa).

Residues glutamine 190, tyrosine 218, asparagine 223, glutamate 239, and aspartate 299 each contribute to the S-adenosyl-L-methionine site. The active-site Nucleophile is the cysteine 324. The active-site Proton acceptor is the glutamate 358.

The protein belongs to the class I-like SAM-binding methyltransferase superfamily. RNA M5U methyltransferase family. TrmA subfamily.

It carries out the reaction uridine(54) in tRNA + S-adenosyl-L-methionine = 5-methyluridine(54) in tRNA + S-adenosyl-L-homocysteine + H(+). The catalysed reaction is uridine(341) in tmRNA + S-adenosyl-L-methionine = 5-methyluridine(341) in tmRNA + S-adenosyl-L-homocysteine + H(+). Its function is as follows. Dual-specificity methyltransferase that catalyzes the formation of 5-methyluridine at position 54 (m5U54) in all tRNAs, and that of position 341 (m5U341) in tmRNA (transfer-mRNA). The sequence is that of tRNA/tmRNA (uracil-C(5))-methyltransferase from Enterobacter sp. (strain 638).